Here is a 354-residue protein sequence, read N- to C-terminus: Probable L-ascorbate-6-phosphate lactonase UlaG (354 aa).

Belongs to the UlaG family. The cofactor is a divalent metal cation.

It is found in the cytoplasm. The catalysed reaction is L-ascorbate 6-phosphate + H2O = 3-dehydro-L-gulonate 6-phosphate. It participates in cofactor degradation; L-ascorbate degradation; D-xylulose 5-phosphate from L-ascorbate: step 1/4. Functionally, probably catalyzes the hydrolysis of L-ascorbate-6-P into 3-keto-L-gulonate-6-P. Is essential for L-ascorbate utilization under anaerobic conditions. The polypeptide is Probable L-ascorbate-6-phosphate lactonase UlaG (Salmonella agona (strain SL483)).